Consider the following 132-residue polypeptide: MVMTDPIADFLTRIRNANQAKHEVLEVPASNIKKGIAEILKREGFVKNVEIIEDDKQGVIRVFLKYGPNGEKVITNLKRVSKPGLRVYKKREDLPKVLNGLGIAILSTSEGLLTDKEARQKNVGGEVIAYVW.

This sequence belongs to the universal ribosomal protein uS8 family. Part of the 30S ribosomal subunit. Contacts proteins S5 and S12.

Functionally, one of the primary rRNA binding proteins, it binds directly to 16S rRNA central domain where it helps coordinate assembly of the platform of the 30S subunit. The sequence is that of Small ribosomal subunit protein uS8 from Streptococcus pneumoniae (strain Taiwan19F-14).